The primary structure comprises 491 residues: UDP-N-acetylmuramate--L-alanine ligase (491 aa).

126–132 (GTHGKTT) is a binding site for ATP.

It belongs to the MurCDEF family.

Its subcellular location is the cytoplasm. The catalysed reaction is UDP-N-acetyl-alpha-D-muramate + L-alanine + ATP = UDP-N-acetyl-alpha-D-muramoyl-L-alanine + ADP + phosphate + H(+). It functions in the pathway cell wall biogenesis; peptidoglycan biosynthesis. Cell wall formation. This chain is UDP-N-acetylmuramate--L-alanine ligase, found in Enterobacter sp. (strain 638).